We begin with the raw amino-acid sequence, 269 residues long: Small ribosomal subunit protein eS1 (269 aa).

Disordered regions lie at residues 1–20 (MAVG…SKKK) and 249–269 (AASG…QESV).

Belongs to the eukaryotic ribosomal protein eS1 family. In terms of assembly, component of the small ribosomal subunit. Mature ribosomes consist of a small (40S) and a large (60S) subunit. The 40S subunit contains about 33 different proteins and 1 molecule of RNA (18S). The 60S subunit contains about 49 different proteins and 3 molecules of RNA (28S, 5.8S and 5S).

It is found in the cytoplasm. This is Small ribosomal subunit protein eS1 from Anopheles darlingi (Mosquito).